We begin with the raw amino-acid sequence, 604 residues long: Sulfite reductase [NADPH] flavoprotein alpha-component (604 aa).

Positions 66 to 204 constitute a Flavodoxin-like domain; the sequence is VTVLSASQTG…SANAWTDNIA (139 aa). Residues 72 to 77, 119 to 122, and 155 to 164 contribute to the FMN site; these read SQTGNA, STQG, and LGDSSYPNFC. One can recognise an FAD-binding FR-type domain in the interval 239–453; the sequence is AAPFPAALLA…VERNDGFRLP (215 aa). Residues Thr-327, Gln-361, 391–394, 409–411, and 424–427 contribute to the FAD site; these read RLYS, TVG, and GGAS. Residues 524 to 525, 530 to 534, and Asp-566 each bind NADP(+); these read SR and KIYVQ. Tyr-604 serves as a coordination point for FAD.

Belongs to the NADPH-dependent sulphite reductase flavoprotein subunit CysJ family. The protein in the N-terminal section; belongs to the flavodoxin family. It in the C-terminal section; belongs to the flavoprotein pyridine nucleotide cytochrome reductase family. In terms of assembly, alpha(8)-beta(8). The alpha component is a flavoprotein, the beta component is a hemoprotein. It depends on FAD as a cofactor. FMN serves as cofactor.

The enzyme catalyses hydrogen sulfide + 3 NADP(+) + 3 H2O = sulfite + 3 NADPH + 4 H(+). The protein operates within sulfur metabolism; hydrogen sulfide biosynthesis; hydrogen sulfide from sulfite (NADPH route): step 1/1. Component of the sulfite reductase complex that catalyzes the 6-electron reduction of sulfite to sulfide. This is one of several activities required for the biosynthesis of L-cysteine from sulfate. The flavoprotein component catalyzes the electron flow from NADPH -&gt; FAD -&gt; FMN to the hemoprotein component. The protein is Sulfite reductase [NADPH] flavoprotein alpha-component of Neisseria meningitidis serogroup B (strain ATCC BAA-335 / MC58).